Consider the following 90-residue polypeptide: Large ribosomal subunit protein bL27 (90 aa).

The interval 1 to 22 is disordered; it reads MAHKKAGGSSRNGRDSESKRLG.

It belongs to the bacterial ribosomal protein bL27 family.

This Allorhizobium ampelinum (strain ATCC BAA-846 / DSM 112012 / S4) (Agrobacterium vitis (strain S4)) protein is Large ribosomal subunit protein bL27.